The sequence spans 85 residues: Toxin CsE8 (85 aa).

Positions 1–19 (MNSLLMITACLVLFGTVWS) are cleaved as a signal peptide. The region spanning 20–83 (EKGYLVHEDT…TWPLIGKLCG (64 aa)) is the LCN-type CS-alpha/beta domain. Disulfide bonds link Cys-31-Cys-82, Cys-35-Cys-58, Cys-44-Cys-63, and Cys-48-Cys-65. Cys-82 is subject to Cysteine amide.

It belongs to the long (4 C-C) scorpion toxin superfamily. Sodium channel inhibitor family. Beta subfamily. As to expression, expressed by the venom gland.

It is found in the secreted. Its function is as follows. Beta toxins bind voltage-independently at site-4 of sodium channels (Nav) and shift the voltage of activation toward more negative potentials thereby affecting sodium channel activation and promoting spontaneous and repetitive firing. This chain is Toxin CsE8, found in Centruroides sculpturatus (Arizona bark scorpion).